Consider the following 91-residue polypeptide: Small ribosomal subunit protein uS19 (91 aa).

The protein belongs to the universal ribosomal protein uS19 family.

Protein S19 forms a complex with S13 that binds strongly to the 16S ribosomal RNA. This Cupriavidus necator (strain ATCC 17699 / DSM 428 / KCTC 22496 / NCIMB 10442 / H16 / Stanier 337) (Ralstonia eutropha) protein is Small ribosomal subunit protein uS19.